The sequence spans 438 residues: Glutamyl-tRNA(Gln) amidotransferase subunit D (438 aa).

Positions 91-421 constitute an Asparaginase/glutaminase domain; the sequence is KNLSILSTGG…SEIYEIMKTN (331 aa). Residues T101, T177, D178, and K254 contribute to the active site.

The protein belongs to the asparaginase 1 family. GatD subfamily. In terms of assembly, heterodimer of GatD and GatE.

The enzyme catalyses L-glutamyl-tRNA(Gln) + L-glutamine + ATP + H2O = L-glutaminyl-tRNA(Gln) + L-glutamate + ADP + phosphate + H(+). Functionally, allows the formation of correctly charged Gln-tRNA(Gln) through the transamidation of misacylated Glu-tRNA(Gln) in organisms which lack glutaminyl-tRNA synthetase. The reaction takes place in the presence of glutamine and ATP through an activated gamma-phospho-Glu-tRNA(Gln). The GatDE system is specific for glutamate and does not act on aspartate. This Methanosphaera stadtmanae (strain ATCC 43021 / DSM 3091 / JCM 11832 / MCB-3) protein is Glutamyl-tRNA(Gln) amidotransferase subunit D.